Reading from the N-terminus, the 376-residue chain is Putative transcription factor egl-18 (376 aa).

Disordered stretches follow at residues M1 to C33, N65 to F122, M148 to P197, and A240 to A264. Residues T9–D27 are compositionally biased toward basic and acidic residues. Composition is skewed to low complexity over residues L68 to P89 and Q165 to S175. Residues V176 to D195 show a composition bias toward basic and acidic residues. Residues T241–S250 are compositionally biased toward polar residues. The GATA-type zinc-finger motif lies at C266 to C290.

As to expression, expressed in differentiated seam cells. Expressed in the head and trunk.

The protein localises to the nucleus. Probable transcription factor. Involved in embryonic development and in vulval development in larvae, acting redundantly, at least in part, with elt-6. Perhaps acting together with elt-6, may form a positive feedback loop to initiate and maintain lin-39 gene expression to ensure proper vulval precursor cell (VPC) fate specification. Together with elt-6, acts as a downstream target of the Wnt/beta-catenin asymmetry pathway, required to adopt or maintain the seam cell fate. Required in seam cells, acting redundantly with elt-6, to promote production of alae, expression of several seam-specific genes and maintenance of seam cells in an unfused state. Plays a role in longevity. May form a transcriptional circuit with GATA factors elt-3 and elt-6. In Caenorhabditis elegans, this protein is Putative transcription factor egl-18.